Reading from the N-terminus, the 860-residue chain is Protein argonaute-2 (860 aa).

The disordered stretch occupies residues 1 to 30 (MYSGAGPALAPPAPPPPPIQGYAFKPPPRP). At Y2 the chain carries 3'-nitrotyrosine. Residues 9-30 (LAPPAPPPPPIQGYAFKPPPRP) are compositionally biased toward pro residues. In terms of domain architecture, PAZ spans 230–349 (PVIEFVCEVL…LPLEVCNIVA (120 aa)). The interval 312–317 (YFKDRH) is interaction with guide RNA. The residue at position 388 (S388) is a Phosphoserine. Residues 518–819 (LVVVILPGKT…VAFRARYHLV (302 aa)) enclose the Piwi domain. Positions 525 to 567 (GKTPVYAEVKRVGDTVLGMATQCVQMKNVQRTTPQTLSNLWLK) are interaction with guide RNA. Residues 588–591 (FQQP) are interaction with GW182 family members. D598 contacts a divalent metal cation. Residues 651–661 (LIQFYKSTRFK) form an interaction with GW182 family members region. D670 contributes to the a divalent metal cation binding site. P701 carries the post-translational modification 4-hydroxyproline. 3 interaction with guide RNA regions span residues 710–711 (KR), 754–762 (HAGIQGTSR), and 791–813 (YVRCTRSVSIPAPAYYAHLVAFR). A divalent metal cation is bound at residue H808. S825, S829, S832, and S835 each carry phosphoserine.

This sequence belongs to the argonaute family. Ago subfamily. Interacts with DICER1 through its Piwi domain and with TARBP2 during assembly of the RNA-induced silencing complex (RISC). Together, DICER1, AGO2 and TARBP2 constitute the trimeric RISC loading complex (RLC), or micro-RNA (miRNA) loading complex (miRLC). Within the RLC/miRLC, DICER1 and TARBP2 are required to process precursor miRNAs (pre-miRNAs) to mature miRNAs and then load them onto AGO2. AGO2 bound to the mature miRNA constitutes the minimal RISC and may subsequently dissociate from DICER1 and TARBP2. Note however that the term RISC has also been used to describe the trimeric RLC/miRLC. The formation of RISC complexes containing siRNAs rather than miRNAs appears to occur independently of DICER1. Interacts with AGO1. Also interacts with DDB1, DDX5, DDX6, DDX20, DHX30, DHX36, DDX47, DHX9, ELAVL, FXR1, GEMIN4, HNRNPF, IGF2BP1, ILF3, IMP8, MATR3, PABPC1, PRMT5, P4HA1, P4HB, RBM4, SART3, TNRC6A, TNRC6B, UPF1 and YBX1. Interacts with the P-body components DCP1A and XRN1. Associates with polysomes and messenger ribonucleoproteins (mNRPs). Interacts with RBM4; the interaction is modulated under stress-induced conditions, occurs under both cell proliferation and differentiation conditions and in an RNA- and phosphorylation-independent manner. Interacts with LIMD1, WTIP and AJUBA. Interacts with TRIM71; the interaction increases in presence of RNA. Interacts with APOBEC3G in an RNA-dependent manner. Interacts with APOBEC3A, APOBEC3C, APOBEC3F and APOBEC3H. Interacts with DICER1, TARBP2, EIF6, MOV10 and RPL7A (60S ribosome subunit); they form a large RNA-induced silencing complex (RISC). Interacts with FMR1. Interacts with ZFP36. Interacts with RC3H1; the interaction is RNA independent. Found in a complex composed of AGO2, CHD7 and ARB2A. Interacts with SND1 and SYT11. Interacts with CLNK. Interacts with GARRE1. Interacts with GRB2; this interaction is important for the formation of a ternary complex containing GRB2, AGO2 and DICER1. Mg(2+) serves as cofactor. It depends on Mn(2+) as a cofactor. In terms of processing, hydroxylated. 4-hydroxylation appears to enhance protein stability but is not required for miRNA-binding or endonuclease activity. Post-translationally, ubiquitinated on surface-exposed lysines by a SCF-like E3 ubiquitin-protein ligase complex containing ZSWIM8 during target-directed microRNA degradation (TDMD), a process that mediates degradation of microRNAs (miRNAs). Ubiquitination by the SCF-like E3 ubiquitin-protein ligase complex containing ZSWIM8 leads to its subsequent degradation, thereby exposing miRNAs for degradation. ZSWIM8 recognizes and binds AGO2 when it is engaged with a TDMD target. Phosphorylation at Ser-388 by AKT3; leads to up-regulate translational repression of microRNA target and down-regulate endonucleolytic cleavage. In terms of processing, a phosphorylation cycle of C-terminal serine cluster (Ser-825-Ser-835) regulates the release of target mRNAs. Target-binding leads to phosphorylation of these residues by CSNK1A1, which reduces the affinity of AGO2 for mRNA and enables target release. The ANKRD52-PPP6C phosphatase complex dephosphorylates the residues, which primes AGO2 for binding a new target.

Its subcellular location is the cytoplasm. It is found in the P-body. It localises to the nucleus. It carries out the reaction Endonucleolytic cleavage to 5'-phosphomonoester.. Functionally, required for RNA-mediated gene silencing (RNAi) by the RNA-induced silencing complex (RISC). The 'minimal RISC' appears to include AGO2 bound to a short guide RNA such as a microRNA (miRNA) or short interfering RNA (siRNA). These guide RNAs direct RISC to complementary mRNAs that are targets for RISC-mediated gene silencing. The precise mechanism of gene silencing depends on the degree of complementarity between the miRNA or siRNA and its target. Binding of RISC to a perfectly complementary mRNA generally results in silencing due to endonucleolytic cleavage of the mRNA specifically by AGO2. Binding of RISC to a partially complementary mRNA results in silencing through inhibition of translation, and this is independent of endonuclease activity. May inhibit translation initiation by binding to the 7-methylguanosine cap, thereby preventing the recruitment of the translation initiation factor eIF4-E. May also inhibit translation initiation via interaction with EIF6, which itself binds to the 60S ribosomal subunit and prevents its association with the 40S ribosomal subunit. The inhibition of translational initiation leads to the accumulation of the affected mRNA in cytoplasmic processing bodies (P-bodies), where mRNA degradation may subsequently occur. In some cases RISC-mediated translational repression is also observed for miRNAs that perfectly match the 3' untranslated region (3'-UTR). Can also up-regulate the translation of specific mRNAs under certain growth conditions. Binds to the AU element of the 3'-UTR of the TNF (TNF-alpha) mRNA and up-regulates translation under conditions of serum starvation. Also required for transcriptional gene silencing (TGS), in which short RNAs known as antigene RNAs or agRNAs direct the transcriptional repression of complementary promoter regions. This Bos taurus (Bovine) protein is Protein argonaute-2 (AGO2).